The primary structure comprises 163 residues: Ribonuclease P protein subunit p25-like protein (163 aa).

2 disordered regions span residues 1 to 22 and 129 to 163; these read MEHY…PQLP and NEYG…DTRF. The segment covering 154–163 has biased composition (basic residues); that stretch reads PRRRARDTRF.

The protein belongs to the histone-like Alba family.

The protein localises to the nucleus. May be a component of ribonuclease P or MRP. The chain is Ribonuclease P protein subunit p25-like protein (RPP25L) from Bos taurus (Bovine).